Reading from the N-terminus, the 277-residue chain is MAIRSYRAYTPGTRHRSVSTFEEISKYKPKKRLTLNKHSKKGRNNRGIITSRHRGGGHKRIYREIDFRRNNNDAPGKIATIEYDPNRNSYICIVNYENGDKRYILHPKGLNVGDLIFSGTEAPISNGNTIPLTKIPVGTFIHNIELTPGKGGQLVRAAGTVAKIMAKEEKWATIRLPSGEFRLISKNCLATIGQVGNIDANKITLGKAGSKRWLGKRPIVRGVAMNSVDHPHGGGEGKTSIGRKKPLTPWGRTALGSKSRPMTKYSNIFILRRRKKR.

Disordered regions lie at residues 36-56 (NKHS…HRGG) and 225-259 (MNSV…GSKS).

It belongs to the universal ribosomal protein uL2 family. As to quaternary structure, part of the 50S ribosomal subunit.

The protein resides in the plastid. It localises to the chloroplast. This chain is Large ribosomal subunit protein uL2c (rpl2), found in Psilotum nudum (Whisk fern).